The primary structure comprises 3210 residues: PF 1022-synthetase (3210 aa).

The segment at 68–454 (VDDRRHAIGH…VKELDVVTAE (387 aa)) is condensation 1. The segment at 483-876 (AGDPNKAAVF…GRKDSQVKIR (394 aa)) is adenylation 1. In terms of domain architecture, Carrier 1 spans 1010–1086 (APATGIEVKL…GLVDVIGRDP (77 aa)). At S1047 the chain carries O-(pantetheine 4'-phosphoryl)serine. A condensation 2 region spans residues 1104-1534 (SFAQGRLWFL…RTPIAVLPLT (431 aa)). Residues 1563–2023 (FRKQVAAHPH…GRMDQQVKIR (461 aa)) form an adenylation 2 region. The tract at residues 2081 to 2236 (EGWKDFFESN…YLLEVVESLV (156 aa)) is S-adenosyl-L-methionine-dependent N-methyltransferase. Carrier domains lie at 2570–2644 (DPFV…RQGL) and 2668–2742 (TPSD…RLTQ). S2604 and S2702 each carry O-(pantetheine 4'-phosphoryl)serine. The condensation 3 stretch occupies residues 2788-3203 (LDVYPATQMQ…KRMLEELCGN (416 aa)). Positions 2976-3002 (VIKGNNNTTPPPPPQQQSTPSGAHHAS) are disordered.

This sequence belongs to the NRP synthetase family. Pantetheine 4'-phosphate is required as a cofactor.

It catalyses the reaction 2 (R)-3-phenyllactate + 2 (R)-lactate + 4 L-leucine + 4 S-adenosyl-L-methionine + 8 ATP = PF1022A + 8 AMP + 4 S-adenosyl-L-homocysteine + 8 diphosphate + 8 H(+). The enzyme catalyses 4 (R)-3-phenyllactate + 4 L-leucine + 4 S-adenosyl-L-methionine + 8 ATP = PF1022B + 8 AMP + 4 S-adenosyl-L-homocysteine + 8 diphosphate + 8 H(+). The catalysed reaction is 3 (R)-3-phenyllactate + (R)-lactate + 4 L-leucine + 4 S-adenosyl-L-methionine + 8 ATP = PF1022C + 8 AMP + 4 S-adenosyl-L-homocysteine + 8 diphosphate + 8 H(+). It carries out the reaction (R)-3-phenyllactate + 3 (R)-lactate + 4 L-leucine + 4 S-adenosyl-L-methionine + 8 ATP = PF1022D + 8 AMP + 4 S-adenosyl-L-homocysteine + 8 diphosphate + 8 H(+). It catalyses the reaction 4 (R)-lactate + 4 L-leucine + 4 S-adenosyl-L-methionine + 8 ATP = PF1022F + 8 AMP + 4 S-adenosyl-L-homocysteine + 8 diphosphate + 8 H(+). Functionally, nonribosomal peptide synthetase that synthesizes cyclooctadepsipeptides (CODPs) PF 1022 that show powerful broad-spectrum anthelmintic activity with low toxicity in animals. Couples 4 N-methyl-L-leucines and a varying content of alpha-D-hydroxy acids (D-lactates or D-phenyllactates) in an alternative fashion. The enzyme is capable of synthesizing all known natural cyclooctadepsipeptides of the PF1022 type differing in the content of D-lactate and D-phenyllactate, using from 4 D-lactates (PF 1022F) to 4 D-phenyllactates (PF 1022B), respectively. The formation of different PF-related compounds is mainly controlled by the molar ratio of the hydroxy acids. N-methylation of the substrate L-leucine takes place after covalent binding prior to peptide bond formation. The sequence is that of PF 1022-synthetase from Rosellinia sp. (Mycelia sterilia).